A 135-amino-acid polypeptide reads, in one-letter code: MAAPKSTATRARRGRRVVKKNVTQGHAYIKSTFNNTIVSITDPKGHVISWASSGQVGFKGSRKSTPFAAQLAAESAARKAMEHGMKKVDVFVKGPGSGRETAIRSLSTAGLEVGTIADVTPQPHNGCRPPKRRRV.

It belongs to the universal ribosomal protein uS11 family. In terms of assembly, part of the 30S ribosomal subunit. Interacts with proteins S7 and S18. Binds to IF-3.

Its function is as follows. Located on the platform of the 30S subunit, it bridges several disparate RNA helices of the 16S rRNA. Forms part of the Shine-Dalgarno cleft in the 70S ribosome. This Corynebacterium urealyticum (strain ATCC 43042 / DSM 7109) protein is Small ribosomal subunit protein uS11.